The chain runs to 172 residues: Large ribosomal subunit protein uL10 (172 aa).

It belongs to the universal ribosomal protein uL10 family. As to quaternary structure, part of the ribosomal stalk of the 50S ribosomal subunit. The N-terminus interacts with L11 and the large rRNA to form the base of the stalk. The C-terminus forms an elongated spine to which L12 dimers bind in a sequential fashion forming a multimeric L10(L12)X complex.

Functionally, forms part of the ribosomal stalk, playing a central role in the interaction of the ribosome with GTP-bound translation factors. In Francisella philomiragia subsp. philomiragia (strain ATCC 25017 / CCUG 19701 / FSC 153 / O#319-036), this protein is Large ribosomal subunit protein uL10.